The primary structure comprises 281 residues: Acetyl-coenzyme A carboxylase carboxyl transferase subunit beta (281 aa).

The 259-residue stretch at 23 to 281 (IWTKCGSCQA…SLLVKLHYKN (259 aa)) folds into the CoA carboxyltransferase N-terminal domain. Residues C27, C30, C46, and C49 each coordinate Zn(2+). The C4-type zinc finger occupies 27 to 49 (CGSCQAVLYKSELEKLQEVCPKC).

Belongs to the AccD/PCCB family. As to quaternary structure, acetyl-CoA carboxylase is a heterohexamer composed of biotin carboxyl carrier protein (AccB), biotin carboxylase (AccC) and two subunits each of ACCase subunit alpha (AccA) and ACCase subunit beta (AccD). Zn(2+) is required as a cofactor.

It is found in the cytoplasm. The enzyme catalyses N(6)-carboxybiotinyl-L-lysyl-[protein] + acetyl-CoA = N(6)-biotinyl-L-lysyl-[protein] + malonyl-CoA. The protein operates within lipid metabolism; malonyl-CoA biosynthesis; malonyl-CoA from acetyl-CoA: step 1/1. Its function is as follows. Component of the acetyl coenzyme A carboxylase (ACC) complex. Biotin carboxylase (BC) catalyzes the carboxylation of biotin on its carrier protein (BCCP) and then the CO(2) group is transferred by the transcarboxylase to acetyl-CoA to form malonyl-CoA. This chain is Acetyl-coenzyme A carboxylase carboxyl transferase subunit beta, found in Alteromonas mediterranea (strain DSM 17117 / CIP 110805 / LMG 28347 / Deep ecotype).